The sequence spans 186 residues: Lumazine protein (186 aa).

Lumazine-binding repeat units follow at residues 1–96 (MFRG…VGRG) and 97–186 (GLTG…LNEW).

6,7-dimethyl-8-(1-D-ribityl)lumazine is required as a cofactor.

In terms of biological role, antenna protein that modulates the color of the bioluminescence emission of the luciferase. In the presence of LumP, luciferase emission is shifted to higher energy values (shorter wavelength). The sequence is that of Lumazine protein (lumP) from Photobacterium leiognathi.